Here is a 366-residue protein sequence, read N- to C-terminus: Chorismate synthase (366 aa).

Arg-48 and Arg-54 together coordinate NADP(+). Residues Arg-125–Ser-127, Asn-241–Ala-242, Gly-285, Lys-300–Ser-304, and Arg-326 contribute to the FMN site.

It belongs to the chorismate synthase family. In terms of assembly, homotetramer. FMNH2 serves as cofactor.

The enzyme catalyses 5-O-(1-carboxyvinyl)-3-phosphoshikimate = chorismate + phosphate. It functions in the pathway metabolic intermediate biosynthesis; chorismate biosynthesis; chorismate from D-erythrose 4-phosphate and phosphoenolpyruvate: step 7/7. In terms of biological role, catalyzes the anti-1,4-elimination of the C-3 phosphate and the C-6 proR hydrogen from 5-enolpyruvylshikimate-3-phosphate (EPSP) to yield chorismate, which is the branch point compound that serves as the starting substrate for the three terminal pathways of aromatic amino acid biosynthesis. This reaction introduces a second double bond into the aromatic ring system. The polypeptide is Chorismate synthase (Cereibacter sphaeroides (strain ATCC 17029 / ATH 2.4.9) (Rhodobacter sphaeroides)).